Consider the following 581-residue polypeptide: Semenogelin-2 (581 aa).

A signal peptide spans 1–23 (MKSIILFVLSLLLILEKQAAVMG). Disordered stretches follow at residues 24 to 62 (QKGG…SKGS), 132 to 157 (GGKA…GISS), 173 to 194 (KEQA…QSSY), and 271 to 581 (NLNQ…PIST). 2 stretches are compositionally biased toward polar residues: residues 138–157 (GTQN…GISS) and 174–194 (EQAS…QSSY). Residues 291–310 (HTEERQLNHGEKSVQKDISK) are compositionally biased toward basic and acidic residues. Polar residues predominate over residues 324 to 333 (KSQNQVTIHS). The span at 334 to 344 (QDQEHGHKENK) shows a compositional bias: basic and acidic residues. Over residues 366–396 (KSVSKGSISIQTEEQIHGKSQNQVRIPSQAQ) the composition is skewed to polar residues. Basic and acidic residues-rich tracts occupy residues 412 to 425 (TEER…KDIQ) and 455 to 464 (DQEHGHKENK). Composition is skewed to polar residues over residues 481-497 (GKNT…SFQT) and 505-529 (SQIQ…SGQS). 2 stretches are compositionally biased toward basic and acidic residues: residues 530-545 (ADRE…KGRY) and 558-581 (TEHE…PIST).

It belongs to the semenogelin family. In terms of assembly, interacts with SERPINA5.

The protein localises to the secreted. In terms of biological role, participates in the formation of a gel matrix (sperm coagulum) entrapping the accessory gland secretions and ejaculated spermatozoa. In Pongo abelii (Sumatran orangutan), this protein is Semenogelin-2 (SEMG2).